The primary structure comprises 634 residues: Chaperone protein HtpG (634 aa).

Residues 1-344 (MSETATQNKE…SNDLPLNVSR (344 aa)) are a; substrate-binding. Positions 345–561 (EILQDNKVTQ…DFEMGTQMAK (217 aa)) are b. The interval 562–634 (LLEAAGQAAP…GAINELLTKR (73 aa)) is c.

This sequence belongs to the heat shock protein 90 family. In terms of assembly, homodimer.

It localises to the cytoplasm. Functionally, molecular chaperone. Has ATPase activity. This chain is Chaperone protein HtpG, found in Vibrio atlanticus (strain LGP32) (Vibrio splendidus (strain Mel32)).